Consider the following 405-residue polypeptide: L-rhamnonate dehydratase (405 aa).

2 residues coordinate substrate: histidine 33 and arginine 59. The Mg(2+) site is built by aspartate 226, glutamate 252, and glutamate 280. Catalysis depends on histidine 329, which acts as the Proton acceptor. Glutamate 349 contacts substrate.

This sequence belongs to the mandelate racemase/muconate lactonizing enzyme family. RhamD subfamily. Homooctamer; tetramer of dimers. Mg(2+) is required as a cofactor.

The catalysed reaction is L-rhamnonate = 2-dehydro-3-deoxy-L-rhamnonate + H2O. Its function is as follows. Catalyzes the dehydration of L-rhamnonate to 2-keto-3-deoxy-L-rhamnonate (KDR). This is L-rhamnonate dehydratase from Salmonella paratyphi C (strain RKS4594).